We begin with the raw amino-acid sequence, 561 residues long: Type II methyltransferase M.BstVI (561 aa).

It belongs to the N(4)/N(6)-methyltransferase family.

It carries out the reaction a 2'-deoxyadenosine in DNA + S-adenosyl-L-methionine = an N(6)-methyl-2'-deoxyadenosine in DNA + S-adenosyl-L-homocysteine + H(+). Its function is as follows. A gamma subtype methylase, recognizes the double-stranded sequence 5'-CTCGAG-3', methylates A-5 on both strands, and protects the DNA from cleavage by the BstVI endonuclease. In Geobacillus stearothermophilus (Bacillus stearothermophilus), this protein is Type II methyltransferase M.BstVI.